The primary structure comprises 199 residues: Large ribosomal subunit protein eL13A (199 aa).

2 positions are modified to phosphothreonine: threonine 144 and threonine 152.

It belongs to the eukaryotic ribosomal protein eL13 family. As to quaternary structure, component of the large ribosomal subunit (LSU). Mature yeast ribosomes consist of a small (40S) and a large (60S) subunit. The 40S small subunit contains 1 molecule of ribosomal RNA (18S rRNA) and 33 different proteins (encoded by 57 genes). The large 60S subunit contains 3 rRNA molecules (25S, 5.8S and 5S rRNA) and 46 different proteins (encoded by 81 genes).

The protein localises to the cytoplasm. Its function is as follows. Component of the ribosome, a large ribonucleoprotein complex responsible for the synthesis of proteins in the cell. The small ribosomal subunit (SSU) binds messenger RNAs (mRNAs) and translates the encoded message by selecting cognate aminoacyl-transfer RNA (tRNA) molecules. The large subunit (LSU) contains the ribosomal catalytic site termed the peptidyl transferase center (PTC), which catalyzes the formation of peptide bonds, thereby polymerizing the amino acids delivered by tRNAs into a polypeptide chain. The nascent polypeptides leave the ribosome through a tunnel in the LSU and interact with protein factors that function in enzymatic processing, targeting, and the membrane insertion of nascent chains at the exit of the ribosomal tunnel. The chain is Large ribosomal subunit protein eL13A from Saccharomyces cerevisiae (strain ATCC 204508 / S288c) (Baker's yeast).